The chain runs to 321 residues: Ribonuclease Z (321 aa).

Zn(2+) contacts are provided by histidine 62, histidine 64, aspartate 66, histidine 67, histidine 139, aspartate 210, and histidine 268. Aspartate 66 serves as the catalytic Proton acceptor.

Belongs to the RNase Z family. Homodimer. The cofactor is Zn(2+).

It carries out the reaction Endonucleolytic cleavage of RNA, removing extra 3' nucleotides from tRNA precursor, generating 3' termini of tRNAs. A 3'-hydroxy group is left at the tRNA terminus and a 5'-phosphoryl group is left at the trailer molecule.. Functionally, zinc phosphodiesterase, which displays some tRNA 3'-processing endonuclease activity. Probably involved in tRNA maturation, by removing a 3'-trailer from precursor tRNA. The polypeptide is Ribonuclease Z (Trichodesmium erythraeum (strain IMS101)).